Reading from the N-terminus, the 295-residue chain is Pyridoxal 5'-phosphate synthase subunit PdxS (295 aa).

Residue Asp-25 coordinates D-ribose 5-phosphate. Residue Lys-82 is the Schiff-base intermediate with D-ribose 5-phosphate of the active site. Gly-154 contacts D-ribose 5-phosphate. Residue Arg-166 coordinates D-glyceraldehyde 3-phosphate. D-ribose 5-phosphate-binding positions include Gly-215 and Gly-236–Ser-237.

The protein belongs to the PdxS/SNZ family. In the presence of PdxT, forms a dodecamer of heterodimers.

It carries out the reaction aldehydo-D-ribose 5-phosphate + D-glyceraldehyde 3-phosphate + L-glutamine = pyridoxal 5'-phosphate + L-glutamate + phosphate + 3 H2O + H(+). The protein operates within cofactor biosynthesis; pyridoxal 5'-phosphate biosynthesis. Its function is as follows. Catalyzes the formation of pyridoxal 5'-phosphate from ribose 5-phosphate (RBP), glyceraldehyde 3-phosphate (G3P) and ammonia. The ammonia is provided by the PdxT subunit. Can also use ribulose 5-phosphate and dihydroxyacetone phosphate as substrates, resulting from enzyme-catalyzed isomerization of RBP and G3P, respectively. This is Pyridoxal 5'-phosphate synthase subunit PdxS from Bacillus cereus (strain 03BB102).